A 388-amino-acid polypeptide reads, in one-letter code: Chorismate synthase (388 aa).

The NADP(+) site is built by Arg-39 and Arg-45. Residues 130–132 (RSS), 251–252 (NA), Gly-296, 311–315 (KPIPT), and Arg-337 each bind FMN.

Belongs to the chorismate synthase family. As to quaternary structure, homotetramer. Requires FMNH2 as cofactor.

It catalyses the reaction 5-O-(1-carboxyvinyl)-3-phosphoshikimate = chorismate + phosphate. The protein operates within metabolic intermediate biosynthesis; chorismate biosynthesis; chorismate from D-erythrose 4-phosphate and phosphoenolpyruvate: step 7/7. Functionally, catalyzes the anti-1,4-elimination of the C-3 phosphate and the C-6 proR hydrogen from 5-enolpyruvylshikimate-3-phosphate (EPSP) to yield chorismate, which is the branch point compound that serves as the starting substrate for the three terminal pathways of aromatic amino acid biosynthesis. This reaction introduces a second double bond into the aromatic ring system. In Streptococcus agalactiae serotype III (strain NEM316), this protein is Chorismate synthase.